The chain runs to 890 residues: Calcium-transporting ATPase (890 aa).

Residues 1-47 (MKFHEMGQTDLLEATNTSMKQGLTEKEVKKRLDKHGPNELQEGKKTS) lie on the Cytoplasmic side of the membrane. A helical membrane pass occupies residues 48–68 (ALLLFFAQFKDFMVLVLLAAT). Residues 69–78 (LISGFLGEYV) are Extracellular-facing. Residues 79 to 99 (DAVAIIAIVFVNGILGFFQER) form a helical membrane-spanning segment. Over 100 to 238 (RAEQSLQALK…TLSTPLQRRL (139 aa)) the chain is Cytoplasmic. The chain crosses the membrane as a helical span at residues 239–258 (EQLGKILIVVALLLTVLVVA). Residues 259-270 (VGVIQGHDLYSM) are Extracellular-facing. The helical transmembrane segment at 271-288 (FLAGVSLAVAAIPEGLPA) threads the bilayer. 4 residues coordinate Ca(2+): V279, A280, I282, and E284. Residues 289–688 (IVTVALSLGV…KEGRNIYENI (400 aa)) lie on the Cytoplasmic side of the membrane. D326 (4-aspartylphosphate intermediate) is an active-site residue. 2 residues coordinate Mg(2+): D633 and D637. The chain crosses the membrane as a helical span at residues 689–708 (RKFIRYLLASNVGEILVMLF). Ca(2+) is bound by residues N699 and E702. The Extracellular portion of the chain corresponds to 709–718 (AMLLALPLPL). A helical transmembrane segment spans residues 719–739 (VPIQILWVNLVTDGLPAMALG). Residues N727, T730, and D731 each contribute to the Ca(2+) site. The Cytoplasmic segment spans residues 740–759 (MDQPEGDVMKRKPRHPKEGV). The helical transmembrane segment at 760-782 (FARKLGWKVVSRGFLIGVATILA) threads the bilayer. The Extracellular segment spans residues 783–798 (FIIVYHRNPENLAYAQ). Residues 799-818 (TIAFATLVLAQLIHVFDCRS) traverse the membrane as a helical segment. Residues 819-830 (ETSVFSRNPFQN) lie on the Cytoplasmic side of the membrane. Residues 831–849 (LYLIGAVLSSILLMLVVIY) form a helical membrane-spanning segment. Residues 850-864 (YPPLQPIFHTVAITP) are Extracellular-facing. A helical transmembrane segment spans residues 865 to 885 (GDWMLVIGMSAIPTFLLAGSL). Topologically, residues 886–890 (LTRKK) are cytoplasmic.

The protein belongs to the cation transport ATPase (P-type) (TC 3.A.3) family. Type IIA subfamily. Phosphorylated in a Ca(2+)-dependent manner starting 4 hours after shifting to sporulation medium.

The protein localises to the cell membrane. The enzyme catalyses Ca(2+)(in) + ATP + H2O = Ca(2+)(out) + ADP + phosphate + H(+). Its function is as follows. This magnesium-dependent enzyme catalyzes the hydrolysis of ATP coupled with the transport of calcium. This is Calcium-transporting ATPase (yloB) from Bacillus subtilis (strain 168).